Here is a 316-residue protein sequence, read N- to C-terminus: Acetyl-coenzyme A carboxylase carboxyl transferase subunit alpha (316 aa).

Residues Arg39–Met293 enclose the CoA carboxyltransferase C-terminal domain.

The protein belongs to the AccA family. As to quaternary structure, acetyl-CoA carboxylase is a heterohexamer composed of biotin carboxyl carrier protein (AccB), biotin carboxylase (AccC) and two subunits each of ACCase subunit alpha (AccA) and ACCase subunit beta (AccD).

It is found in the cytoplasm. The enzyme catalyses N(6)-carboxybiotinyl-L-lysyl-[protein] + acetyl-CoA = N(6)-biotinyl-L-lysyl-[protein] + malonyl-CoA. It functions in the pathway lipid metabolism; malonyl-CoA biosynthesis; malonyl-CoA from acetyl-CoA: step 1/1. Its function is as follows. Component of the acetyl coenzyme A carboxylase (ACC) complex. First, biotin carboxylase catalyzes the carboxylation of biotin on its carrier protein (BCCP) and then the CO(2) group is transferred by the carboxyltransferase to acetyl-CoA to form malonyl-CoA. The polypeptide is Acetyl-coenzyme A carboxylase carboxyl transferase subunit alpha (Stutzerimonas stutzeri (strain A1501) (Pseudomonas stutzeri)).